We begin with the raw amino-acid sequence, 369 residues long: DNA replication and repair protein RecF (369 aa).

An ATP-binding site is contributed by 30-37 (GQNAQGKT).

This sequence belongs to the RecF family.

It localises to the cytoplasm. Functionally, the RecF protein is involved in DNA metabolism; it is required for DNA replication and normal SOS inducibility. RecF binds preferentially to single-stranded, linear DNA. It also seems to bind ATP. In Acetivibrio thermocellus (strain ATCC 27405 / DSM 1237 / JCM 9322 / NBRC 103400 / NCIMB 10682 / NRRL B-4536 / VPI 7372) (Clostridium thermocellum), this protein is DNA replication and repair protein RecF.